A 660-amino-acid polypeptide reads, in one-letter code: Bifunctional polymyxin resistance protein ArnA (660 aa).

Residues 1–304 (MKTVVFAYHD…MLGLVQGSRL (304 aa)) form a formyltransferase ArnAFT region. Residue 86–88 (HLI) coordinates (6R)-10-formyltetrahydrofolate. Residue histidine 104 is the Proton donor; for formyltransferase activity of the active site. (6R)-10-formyltetrahydrofolate-binding positions include arginine 114 and 136–140 (VKRAD). Positions 314-660 (RRTRVLILGV…RTVDLTDKPS (347 aa)) are dehydrogenase ArnADH. Residues aspartate 347 and 368 to 369 (DI) contribute to the NAD(+) site. Residues alanine 393, tyrosine 398, and 432–433 (TS) contribute to the UDP-alpha-D-glucuronate site. The Proton acceptor; for decarboxylase activity role is filled by glutamate 434. Residues arginine 460, asparagine 492, 526–535 (KLIDGGKQKR), and tyrosine 613 contribute to the UDP-alpha-D-glucuronate site. Arginine 619 functions as the Proton donor; for decarboxylase activity in the catalytic mechanism.

This sequence in the N-terminal section; belongs to the Fmt family. UDP-L-Ara4N formyltransferase subfamily. The protein in the C-terminal section; belongs to the NAD(P)-dependent epimerase/dehydratase family. UDP-glucuronic acid decarboxylase subfamily. In terms of assembly, homohexamer, formed by a dimer of trimers.

It catalyses the reaction UDP-alpha-D-glucuronate + NAD(+) = UDP-beta-L-threo-pentopyranos-4-ulose + CO2 + NADH. The enzyme catalyses UDP-4-amino-4-deoxy-beta-L-arabinose + (6R)-10-formyltetrahydrofolate = UDP-4-deoxy-4-formamido-beta-L-arabinose + (6S)-5,6,7,8-tetrahydrofolate + H(+). Its pathway is nucleotide-sugar biosynthesis; UDP-4-deoxy-4-formamido-beta-L-arabinose biosynthesis; UDP-4-deoxy-4-formamido-beta-L-arabinose from UDP-alpha-D-glucuronate: step 1/3. It participates in nucleotide-sugar biosynthesis; UDP-4-deoxy-4-formamido-beta-L-arabinose biosynthesis; UDP-4-deoxy-4-formamido-beta-L-arabinose from UDP-alpha-D-glucuronate: step 3/3. It functions in the pathway bacterial outer membrane biogenesis; lipopolysaccharide biosynthesis. Its function is as follows. Bifunctional enzyme that catalyzes the oxidative decarboxylation of UDP-glucuronic acid (UDP-GlcUA) to UDP-4-keto-arabinose (UDP-Ara4O) and the addition of a formyl group to UDP-4-amino-4-deoxy-L-arabinose (UDP-L-Ara4N) to form UDP-L-4-formamido-arabinose (UDP-L-Ara4FN). The modified arabinose is attached to lipid A and is required for resistance to polymyxin and cationic antimicrobial peptides. The polypeptide is Bifunctional polymyxin resistance protein ArnA (Shigella sonnei (strain Ss046)).